A 427-amino-acid polypeptide reads, in one-letter code: 3-phosphoshikimate 1-carboxyvinyltransferase (427 aa).

The 3-phosphoshikimate site is built by K22, S23, and R27. Residue K22 participates in phosphoenolpyruvate binding. Phosphoenolpyruvate contacts are provided by G96 and R124. Residues S169, S170, Q171, S197, D313, N336, and K340 each coordinate 3-phosphoshikimate. Q171 provides a ligand contact to phosphoenolpyruvate. The active-site Proton acceptor is the D313. Phosphoenolpyruvate-binding residues include R344, R386, and K411.

It belongs to the EPSP synthase family. As to quaternary structure, monomer.

It localises to the cytoplasm. It carries out the reaction 3-phosphoshikimate + phosphoenolpyruvate = 5-O-(1-carboxyvinyl)-3-phosphoshikimate + phosphate. It functions in the pathway metabolic intermediate biosynthesis; chorismate biosynthesis; chorismate from D-erythrose 4-phosphate and phosphoenolpyruvate: step 6/7. Catalyzes the transfer of the enolpyruvyl moiety of phosphoenolpyruvate (PEP) to the 5-hydroxyl of shikimate-3-phosphate (S3P) to produce enolpyruvyl shikimate-3-phosphate and inorganic phosphate. The chain is 3-phosphoshikimate 1-carboxyvinyltransferase from Salmonella heidelberg (strain SL476).